Here is a 210-residue protein sequence, read N- to C-terminus: TBC1 domain family member 28 (210 aa).

Positions 101 to 210 (VIPLAVRGRA…WVSLGGVATS (110 aa)) constitute a Rab-GAP TBC domain.

The polypeptide is TBC1 domain family member 28 (TBC1D28) (Homo sapiens (Human)).